A 303-amino-acid chain; its full sequence is Caspase-7 (303 aa).

The span at 1–21 (MADDQGCIEEQGVEDSANEDS) shows a compositional bias: acidic residues. A disordered region spans residues 1-30 (MADDQGCIEEQGVEDSANEDSVDAKPDRSS). A2 bears the N-acetylalanine mark. Residues 2 to 23 (ADDQGCIEEQGVEDSANEDSVD) constitute a propeptide, N-terminally processed. S30 is modified (phosphoserine; by PAK2). S37 bears the Phosphoserine mark. The segment at 38–41 (KKKK) is exosite. The interval 76–87 (KNFDKVTGMGVR) is loop L1. Residue H144 is part of the active site. At T173 the chain carries Phosphothreonine; by PAK2. C186 is an active-site residue. The interval 187 to 196 (RGTELDDGIQ) is loop L2. Positions 199–206 (SGPINDTD) are excised as a propeptide. The loop L3 stretch occupies residues 226–238 (VPGYYSWRSPGRG). Residue R233 is modified to (Microbial infection) ADP-riboxanated arginine. Position 239 is a phosphoserine; by PAK2 (S239). The segment at 274 to 288 (ESQSDDPHFHEKKQI) is loop L4.

This sequence belongs to the peptidase C14A family. As to quaternary structure, heterotetramer that consists of two anti-parallel arranged heterodimers, each one formed by a 20 kDa (p20) and a 11 kDa (p11) subunit. Interacts with XIAP (via its second BIR domain); inhibiting CASP7 activity. Interacts with BIRC6/bruce. Interacts with ATXN3 (short isoform 1). Interacts with HSPA5. In terms of processing, cleavage by different proteases, such as granzyme B (GZMB), caspase-1 (CASP1), caspase-8 (CASP8), caspase-9 (CASP9) or caspase-10 (CASP10) generate the two active subunits. Its involvement in different programmed cell death processes is probably specified by the protease that activates CASP7. Cleaved and activated by initiator caspases (CASP8, CASP9 and/or CASP10), leading to execution phase of apoptosis. Cleavage and maturation by GZMB regulates granzyme-mediated programmed cell death. Cleaved and activated by CASP1 in response to bacterial infection. Propeptide domains can also be cleaved efficiently by CASP3. Active heterodimers between the small subunit of caspase-7 and the large subunit of CASP3, and vice versa, also occur. Also cleaved at the N-terminus at alternative sites by CAPN1, leading to its activation. Phosphorylation at Ser-30 and Ser-239 by PAK2 inhibits its activity. Phosphorylation at Ser-30 prevents cleavage and activation by initiator caspase CASP9, while phosphorylation at Ser-239 prevents thiol protease activity by preventing substrate-binding. Post-translationally, (Microbial infection) ADP-riboxanation by C.violaceum CopC blocks CASP7 processing, preventing CASP7 activation and ability to recognize and cleave substrates. In terms of processing, ubiquitinated by BIRC6; this activity is inhibited by DIABLO/SMAC. In terms of tissue distribution, highly expressed in lung, skeletal muscle, liver, kidney, spleen and heart, and moderately in testis. No expression in the brain.

It is found in the cytoplasm. It localises to the cytosol. The protein resides in the nucleus. Its subcellular location is the secreted. The protein localises to the extracellular space. The enzyme catalyses Strict requirement for an Asp residue at position P1 and has a preferred cleavage sequence of Asp-Glu-Val-Asp-|-.. During activation, the N-terminal disordered prodomain is removed by cleavage. Concomitantly, double cleavage gives rise to a large Caspase-7 subunit p20 and a small Caspase-7 subunit p11. The two large and two small subunits then assemble to form the active CASP7 complex. Can be cleaved and activated by different caspases, depending on the context. Cleaved and activated by initiator caspases (CASP8, CASP9 and/or CASP10), leading to execution phase of apoptosis. Inhibited by XIAP, which directly binds to the active site pocket and obstructs substrate entry. Cleavage and maturation by GZMB regulates granzyme-mediated programmed cell death. Cleavage and maturation by CASP1 regulates pyroptosis. Phosphorylation at Ser-30 and Ser-239 by PAK2 inhibits its activity. Inhibited by isatin sulfonamides. Inhibited by 2-(2,4-Dichlorophenoxy)- N-(2-mercapto-ethyl)-acetamide (DICA) and 5-Fluoro-1H-indole-2- carboxylic acid (2-mercapto-ethyl)-amide (FICA) allosteric inhibitors, which disrupt an interaction between Arg-187 and Tyr-223. Specifically inhibited by DARPin D7.18 and D7.43, which specifically bind to the precursor CASP7 and prevent its processing and activation. Inhibited by BIRC6; following inhibition of BIRC6-caspase binding by DIABLO/SMAC, BIRC6 is subjected to caspase cleavage, leading to an increase in active caspases. Functionally, thiol protease involved in different programmed cell death processes, such as apoptosis, pyroptosis or granzyme-mediated programmed cell death, by proteolytically cleaving target proteins. Has a marked preference for Asp-Glu-Val-Asp (DEVD) consensus sequences, with some plasticity for alternate non-canonical sequences. Its involvement in the different programmed cell death processes is probably determined by upstream proteases that activate CASP7. Acts as an effector caspase involved in the execution phase of apoptosis: following cleavage and activation by initiator caspases (CASP8, CASP9 and/or CASP10), mediates execution of apoptosis by catalyzing cleavage of proteins, such as CLSPN, PARP1, PTGES3 and YY1. Compared to CASP3, acts as a minor executioner caspase and cleaves a limited set of target proteins. Acts as a key regulator of the inflammatory response in response to bacterial infection by catalyzing cleavage and activation of the sphingomyelin phosphodiesterase SMPD1 in the extracellular milieu, thereby promoting membrane repair. Regulates pyroptosis in intestinal epithelial cells: cleaved and activated by CASP1 in response to S.typhimurium infection, promoting its secretion to the extracellular milieu, where it catalyzes activation of SMPD1, generating ceramides that repair membranes and counteract the action of gasdermin-D (GSDMD) pores. Regulates granzyme-mediated programmed cell death in hepatocytes: cleaved and activated by granzyme B (GZMB) in response to bacterial infection, promoting its secretion to the extracellular milieu, where it catalyzes activation of SMPD1, generating ceramides that repair membranes and counteract the action of perforin (PRF1) pores. Following cleavage by CASP1 in response to inflammasome activation, catalyzes processing and inactivation of PARP1, alleviating the transcription repressor activity of PARP1. Acts as an inhibitor of type I interferon production during virus-induced apoptosis by mediating cleavage of antiviral proteins CGAS, IRF3 and MAVS, thereby preventing cytokine overproduction. Cleaves and activates sterol regulatory element binding proteins (SREBPs). Cleaves phospholipid scramblase proteins XKR4, XKR8 and XKR9. In case of infection, catalyzes cleavage of Kaposi sarcoma-associated herpesvirus protein ORF57, thereby preventing expression of viral lytic genes. Cleaves BIRC6 following inhibition of BIRC6-caspase binding by DIABLO/SMAC. In terms of biological role, lacks enzymatic activity. This is Caspase-7 from Homo sapiens (Human).